The chain runs to 448 residues: Adenylosuccinate synthetase (448 aa).

Residues 22-28 (GDEGKGK) and 50-52 (GHT) each bind GTP. Asp23 serves as the catalytic Proton acceptor. 2 residues coordinate Mg(2+): Asp23 and Gly50. IMP is bound by residues 23 to 26 (DEGK), 48 to 51 (NAGH), Thr139, Arg153, Gln234, Thr249, and Arg321. The active-site Proton donor is His51. Residue 317-323 (SVTGRPR) participates in substrate binding. Residues Arg323, 349–351 (KLD), and 431–433 (STG) contribute to the GTP site.

The protein belongs to the adenylosuccinate synthetase family. In terms of assembly, homodimer. Mg(2+) is required as a cofactor.

It localises to the cytoplasm. It catalyses the reaction IMP + L-aspartate + GTP = N(6)-(1,2-dicarboxyethyl)-AMP + GDP + phosphate + 2 H(+). It participates in purine metabolism; AMP biosynthesis via de novo pathway; AMP from IMP: step 1/2. Functionally, plays an important role in the de novo pathway of purine nucleotide biosynthesis. Catalyzes the first committed step in the biosynthesis of AMP from IMP. In Paraburkholderia phymatum (strain DSM 17167 / CIP 108236 / LMG 21445 / STM815) (Burkholderia phymatum), this protein is Adenylosuccinate synthetase.